The sequence spans 145 residues: Functional amyloid chaperone FapA (145 aa).

The signal sequence occupies residues 1–27 (MRKRDKRLYHLLLVGCVLGSLSLTAQA).

The protein belongs to the FapA family. As to quaternary structure, monomer in solution. Interacts with FapC but not FapB in vitro.

The protein resides in the periplasm. Its function is as follows. An intrinsically disordered chaperone for fibril amyloid FapC that guards against fibrillation, pro within the periplasm. Upon overexpression of the endogenous six-gene locus (fapA-fapF), cells form large clumps during liquid growth, make large amounts of biofilm and produce relatively unstable amyloid fibrils. The polypeptide is Functional amyloid chaperone FapA (Pseudomonas putida (strain ATCC 700007 / DSM 6899 / JCM 31910 / BCRC 17059 / LMG 24140 / F1)).